The sequence spans 67 residues: Kappa-scoloptoxin(04)-Ssd1b (67 aa).

The first 24 residues, methionine 1–glycine 24, serve as a signal peptide directing secretion. The propeptide occupies glutamate 25–arginine 36. 2 cysteine pairs are disulfide-bonded: cysteine 44-cysteine 55 and cysteine 49-cysteine 62.

In terms of tissue distribution, expressed by the venom gland.

It is found in the secreted. This chain is Kappa-scoloptoxin(04)-Ssd1b, found in Scolopendra dehaani (Thai centipede).